A 299-amino-acid chain; its full sequence is Undecaprenyl-diphosphatase (299 aa).

8 helical membrane-spanning segments follow: residues 10–32 (LFSL…RNLV), 63–83 (PGVS…IAYF), 112–132 (LAIA…KLFW), 143–163 (LPSI…AESF), 178–198 (GFVV…RSGS), 213–233 (AARF…LVEL), 243–263 (GGVL…WLAI), and 276–296 (WIFV…WLSG).

Belongs to the UppP family.

Its subcellular location is the cell inner membrane. The catalysed reaction is di-trans,octa-cis-undecaprenyl diphosphate + H2O = di-trans,octa-cis-undecaprenyl phosphate + phosphate + H(+). Its function is as follows. Catalyzes the dephosphorylation of undecaprenyl diphosphate (UPP). Confers resistance to bacitracin. The chain is Undecaprenyl-diphosphatase from Prochlorococcus marinus (strain MIT 9313).